A 272-amino-acid polypeptide reads, in one-letter code: uncharacterized protein (272 aa).

The protein belongs to the chlamydial CPn_0389/CT_041/TC_0311 family.

This is an uncharacterized protein from Chlamydia pneumoniae (Chlamydophila pneumoniae).